An 858-amino-acid polypeptide reads, in one-letter code: Phospholipase D gamma 1 (858 aa).

In terms of domain architecture, C2 spans 27–163 (PFATSSGSLR…CSGNRIEGLF (137 aa)). D225 lines the Ca(2+) pocket. A PLD phosphodiesterase 1 domain is found at 364–399 (TIYTHHQKTVIVDAEAAQNRRKIVAFVGGLDLCNGR). Residues H369, K371, and D376 contribute to the active site. H369 contributes to the a 1,2-diacyl-sn-glycero-3-phosphate binding site. Ca(2+) is bound by residues H405 and H437. Q565 provides a ligand contact to a 1,2-diacyl-sn-glycero-3-phosphate. S680 carries the post-translational modification Phosphoserine. A PLD phosphodiesterase 2 domain is found at 704 to 731 (FMIYVHSKGMVVDDEFVLIGSANINQRS). Catalysis depends on residues H709, K711, and D716. H709 is an a 1,2-diacyl-sn-glycero-3-phosphate binding site. A Ca(2+)-binding site is contributed by E772.

The protein belongs to the phospholipase D family. C2-PLD subfamily. Ca(2+) is required as a cofactor. In terms of tissue distribution, highly expressed in roots and flowers, moderately in stems, leaves and seedlings and low in siliques. Not detected in seeds.

It localises to the cytoplasm. The protein resides in the membrane. It carries out the reaction a 1,2-diacyl-sn-glycero-3-phosphocholine + H2O = a 1,2-diacyl-sn-glycero-3-phosphate + choline + H(+). With respect to regulation, inhibited by neomycin. Up-regulated by PIP2 binding. In terms of biological role, hydrolyzes glycerol-phospholipids at the terminal phosphodiesteric bond to generate phosphatidic acids (PA). Plays an important role in various cellular processes, including phytohormone action, vesicular trafficking, secretion, cytoskeletal arrangement, meiosis, tumor promotion, pathogenesis, membrane deterioration and senescence. Can use phosphatidylserine (PS) and phosphatidylethanolamine (PE) as substrates only in the presence of PIP2. Can use phosphatidylcholine (PC), phosphatidylglycerol (PG) or N-acylphosphatidylethanolamine (NAPE) as substrates in the presence of PE and PIP2. Involved in membrane lipid modulation under aluminum (Al) stress and negatively modulate plant tolerance to Al. The sequence is that of Phospholipase D gamma 1 from Arabidopsis thaliana (Mouse-ear cress).